The following is a 212-amino-acid chain: MKVAVIDYGMGNLHSVLKSLQAVNENGADIFLTRDPEAVVKADKVVFPGQGAMPDCMRELNRHGLAEAVRETTQSKPFFGICVGAQLLFEHSEEGDTAGLGLFPGKVVRFADDQVAGGERLKVPHMGWNQVYQTRSHPLFAGIADGERFYFVHSYHFAPADAALTLAESDYPQRFACIVGRGNIFATQFHTEKSHRAGLQMMKNFLAWDGNV.

The region spanning 2-212 is the Glutamine amidotransferase type-1 domain; sequence KVAVIDYGMG…KNFLAWDGNV (211 aa). Residue Cys82 is the Nucleophile of the active site. Active-site residues include His190 and Glu192.

As to quaternary structure, heterodimer of HisH and HisF.

Its subcellular location is the cytoplasm. The catalysed reaction is 5-[(5-phospho-1-deoxy-D-ribulos-1-ylimino)methylamino]-1-(5-phospho-beta-D-ribosyl)imidazole-4-carboxamide + L-glutamine = D-erythro-1-(imidazol-4-yl)glycerol 3-phosphate + 5-amino-1-(5-phospho-beta-D-ribosyl)imidazole-4-carboxamide + L-glutamate + H(+). It catalyses the reaction L-glutamine + H2O = L-glutamate + NH4(+). The protein operates within amino-acid biosynthesis; L-histidine biosynthesis; L-histidine from 5-phospho-alpha-D-ribose 1-diphosphate: step 5/9. IGPS catalyzes the conversion of PRFAR and glutamine to IGP, AICAR and glutamate. The HisH subunit catalyzes the hydrolysis of glutamine to glutamate and ammonia as part of the synthesis of IGP and AICAR. The resulting ammonia molecule is channeled to the active site of HisF. This Chromobacterium violaceum (strain ATCC 12472 / DSM 30191 / JCM 1249 / CCUG 213 / NBRC 12614 / NCIMB 9131 / NCTC 9757 / MK) protein is Imidazole glycerol phosphate synthase subunit HisH.